Consider the following 533-residue polypeptide: Probable lipid II flippase MurJ (533 aa).

The next 14 membrane-spanning stretches (helical) occupy residues 11–31, 39–61, 96–116, 135–155, 166–186, 196–216, 253–273, 284–304, 330–350, 360–380, 400–420, 422–442, 452–472, and 493–513; these read LANIAGIVAIATLISKVFGLL, AFGVGTVVTAYAYAYVIPGFLFI, LVSGVLLGVTIILVLGAGIFI, LQIMAPMALLSGLIGIGFGTL, ISPLLSSITVILGLGVAVWQL, WLLGSLLLAGGTTAGAVLQWL, LSSGMLYINFATNLFFASFIP, FVALTPLGIISNMILVPFLPV, LTMFPLTAILVGLAIPIVQVI, AAAEVAPVLAAYGLGMFFYLG, VSLFNIFLNGLLDYLFYKPFG, VGIVMATVGVNLFSMTIFIWM, LGGWAMDLGKLVGVTAIASVA, and ILEVLTMSSIILVVFTVGVAL.

It belongs to the MurJ/MviN family.

The protein resides in the cell inner membrane. Its pathway is cell wall biogenesis; peptidoglycan biosynthesis. In terms of biological role, involved in peptidoglycan biosynthesis. Transports lipid-linked peptidoglycan precursors from the inner to the outer leaflet of the cytoplasmic membrane. The sequence is that of Probable lipid II flippase MurJ from Synechocystis sp. (strain ATCC 27184 / PCC 6803 / Kazusa).